Reading from the N-terminus, the 350-residue chain is tRNA uridine(34) hydroxylase (350 aa).

Residues 146-240 enclose the Rhodanese domain; it reads DDPDALFIDM…YARKAREQGL (95 aa). The Cysteine persulfide intermediate role is filled by C200.

It belongs to the TrhO family.

It catalyses the reaction uridine(34) in tRNA + AH2 + O2 = 5-hydroxyuridine(34) in tRNA + A + H2O. In terms of biological role, catalyzes oxygen-dependent 5-hydroxyuridine (ho5U) modification at position 34 in tRNAs, the first step in 5-carboxymethoxyuridine (cmo5U) biosynthesis. May be part of an alternate pathway, which is able to bypass cmo5U biogenesis in a subset of tRNAs under aerobic conditions. The sequence is that of tRNA uridine(34) hydroxylase from Escherichia coli O45:K1 (strain S88 / ExPEC).